The following is a 290-amino-acid chain: Porphobilinogen deaminase (290 aa).

An S-(dipyrrolylmethanemethyl)cysteine modification is found at Cys237.

Belongs to the HMBS family. As to quaternary structure, monomer. Requires dipyrromethane as cofactor.

It carries out the reaction 4 porphobilinogen + H2O = hydroxymethylbilane + 4 NH4(+). The protein operates within porphyrin-containing compound metabolism; protoporphyrin-IX biosynthesis; coproporphyrinogen-III from 5-aminolevulinate: step 2/4. Functionally, tetrapolymerization of the monopyrrole PBG into the hydroxymethylbilane pre-uroporphyrinogen in several discrete steps. The chain is Porphobilinogen deaminase from Clostridium kluyveri (strain NBRC 12016).